A 395-amino-acid chain; its full sequence is Guanine nucleotide-binding protein subunit beta-5 (395 aa).

7 WD repeats span residues 103-142 (GHGNKVLCMDWCKDKRRIVSSSQDGKVIVWDSFTTNKEHA), 145-184 (MPCTWVMACAYAPSGCAIACGGLDNKCSVYPLTFDKNENM), 193-234 (MHTN…QSFH), 236-278 (HGAD…QAFE), 279-318 (THESDVNSVRYYPSGDAFASGSDDATCRLYDLRADREVAI), 320-362 (SKES…RVSI), and 365-394 (GHENRVSTLRVSPDGTAFCSGSWDHTLRVW).

Belongs to the WD repeat G protein beta family. As to quaternary structure, component of a complex composed of RGS9 (isoform RGS9-1), GNB5 and RGS9BP; within this complex, the presence of GNB5 stabilizes both itself and RGS9 and increases RGS9 GTPase-activating protein (GAP) activity. Interacts with RGS7, forming the RGS7-GNB5 complex; within this complex, the presence of GNB5 increases RGS7 GTPase-activating protein (GAP) activity. Interacts with GPR158; promotes the GTPase activator activity of the RGS7-GNB5 complex in absence of glycine, in contrast GTPase activator activity of the RGS7-GNB5 complex is inhibited in presence of glycine. Interacts with RGS6. As to expression, isoform 1 is only detected in retina. Isoform 2 is detected in brain (at protein level). Isoform 2 is detected in brain.

Its subcellular location is the membrane. Its function is as follows. Enhances GTPase-activating protein (GAP) activity of regulator of G protein signaling (RGS) proteins, such as RGS7 and RGS9, hence involved in the termination of the signaling initiated by the G protein coupled receptors (GPCRs) by accelerating the GTP hydrolysis on the G-alpha subunits, thereby promoting their inactivation. Increases RGS7 GTPase-activating protein (GAP) activity, thereby regulating mood and cognition. Increases RGS9 GTPase-activating protein (GAP) activity, hence contributes to the deactivation of G protein signaling initiated by D(2) dopamine receptors. May play an important role in neuronal signaling, including in the parasympathetic, but not sympathetic, control of heart rate. The protein is Guanine nucleotide-binding protein subunit beta-5 (Gnb5) of Mus musculus (Mouse).